A 104-amino-acid polypeptide reads, in one-letter code: MGTRLKVLRVFKDLHRTRRDVFRDDNRALTAARVKINEEFKKNKNETSDDNIKEMLKMARAVETILRESVIQAEHVDENKIVLRPRKSLLLENVPYCDAPSKKT.

It belongs to the complex I LYR family. As to quaternary structure, interacts with UQCRFS1.

Its subcellular location is the mitochondrion matrix. In terms of biological role, assembly factor required for Rieske Fe-S protein UQCRFS1 incorporation into the cytochrome b-c1 (CIII) complex. Functions as a chaperone, binding to this subunit within the mitochondrial matrix and stabilizing it prior to its translocation and insertion into the late CIII dimeric intermediate within the mitochondrial inner membrane. The chain is Complex III assembly factor LYRM7 (LYRM7) from Danio rerio (Zebrafish).